A 116-amino-acid polypeptide reads, in one-letter code: Large ribosomal subunit protein bL20 (116 aa).

Belongs to the bacterial ribosomal protein bL20 family.

Binds directly to 23S ribosomal RNA and is necessary for the in vitro assembly process of the 50S ribosomal subunit. It is not involved in the protein synthesizing functions of that subunit. This chain is Large ribosomal subunit protein bL20, found in Helicobacter pylori (strain G27).